Consider the following 531-residue polypeptide: MNCSPPGSCTDTERQRSGTPATPCATLAPTHPLRQANRLPIRRIKMLTAHTGHLLHPEYLQPLSSTPISPIELDAKKSPLALLAQTCSQIGKPDPPPSSKLNSVTSSEKESGRSSSLKLGESPLEDKSSFKPYAKGGETRKESGSSAGGAADKAGFRVPSGSCQPFPHAPSPSSRVSSPGQHCESKNNESQEKKEPEVNKSSLETSQANPTLTRASISNSSAESSQSGDVAPSSKSDPPSLGSGHVAPISPYKPGHSVFPLPPSGIGYHGSIVGAYAGYPSQYVPGLDHTKSSLVGNQLPGTLGLPGKPPSSSPLTGASPPSFMQGLCRDPYCLSYHNASHLGSSSCSTCVHDPSALKSGYPLVYPSHPLHSVHTTLSSSVTPSLSGHPLYTYGFMLQNDPVPHICNWVSASGPCDKRFATSEELLAHLRTHTALPGADKLLAGYPTGLGSAASCHLHLPPTGPGSPNTLPGSLSLRSPHTFGLSRYHPYGKGHLTAPNGLPVPSLPAGSYYSPYALYGQRLTSASALGYQ.

Residues 1–10 (MNCSPPGSCT) are compositionally biased toward polar residues. 3 disordered regions span residues 1–28 (MNCS…ATLA), 88–249 (SQIG…VAPI), and 295–318 (VGNQ…LTGA). Composition is skewed to low complexity over residues 19–28 (TPATPCATLA) and 113–122 (RSSSLKLGES). Polar residues predominate over residues 171 to 180 (SPSSRVSSPG). Basic and acidic residues predominate over residues 183 to 198 (CESKNNESQEKKEPEV). The span at 199–215 (NKSSLETSQANPTLTRA) shows a compositional bias: polar residues. A compositionally biased stretch (low complexity) spans 216–227 (SISNSSAESSQS). A C2H2-type zinc finger spans residues 404 to 432 (HICNWVSASGPCDKRFATSEELLAHLRTH).

Belongs to the Elbow/Noc family.

The protein resides in the nucleus. It localises to the cytoplasm. Transcriptional corepressor which does not bind directly to DNA and may regulate transcription through recruitment of histone deacetylases to gene promoters. Regulates cell adhesion, migration and proliferation. Involved in specification of the lateral neural plate border (NPB). May be required for segmental gene expression during hindbrain development. The sequence is that of Zinc finger protein 703-B (znf703-b) from Xenopus laevis (African clawed frog).